A 307-amino-acid chain; its full sequence is Cytochrome c1 1, heme protein, mitochondrial (307 aa).

A mitochondrion-targeting transit peptide spans 1-64 (MVGGGVIQQI…LLSFSTVASA (64 aa)). Topologically, residues 65 to 270 (DEAEHGLESP…EPEMEERKLM (206 aa)) are mitochondrial intermembrane. Positions 90–246 (ASIRRGHQVY…YEDGVPATEA (157 aa)) constitute a Cytochrome c domain. Heme c contacts are provided by Cys-103, Cys-106, His-107, and Met-226. A helical membrane pass occupies residues 271–288 (GFKWIFLLSLALLQAAYY). The Mitochondrial matrix segment spans residues 289 to 307 (RRLKWSVLKSRKLVLDVVN).

Belongs to the cytochrome c family. In terms of assembly, component of the ubiquinol-cytochrome c oxidoreductase (cytochrome b-c1 complex, complex III, CIII), a multisubunit enzyme composed of 10 subunits. The complex is composed of 3 respiratory subunits cytochrome b (MT-CYB), cytochrome c1 (CYC1-1 or CYC1-2) and Rieske protein (UCR1-1 or UCR1-2), 2 core protein subunits MPPalpha1 (or MPPalpha2) and MPPB, and 5 low-molecular weight protein subunits QCR7-1 (or QCR7-2), UCRQ-1 (or UCRQ-2), QCR9, UCRY and probably QCR6-1 (or QCR6-2). The complex exists as an obligatory dimer and forms supercomplexes (SCs) in the inner mitochondrial membrane with NADH-ubiquinone oxidoreductase (complex I, CI), resulting in different assemblies (supercomplexes SCI(1)III(2) and SCI(2)III(4)). Post-translationally, binds 1 heme c group covalently per subunit.

It is found in the mitochondrion inner membrane. In terms of biological role, component of the ubiquinol-cytochrome c oxidoreductase, a multisubunit transmembrane complex that is part of the mitochondrial electron transport chain which drives oxidative phosphorylation. The respiratory chain contains 3 multisubunit complexes succinate dehydrogenase (complex II, CII), ubiquinol-cytochrome c oxidoreductase (cytochrome b-c1 complex, complex III, CIII) and cytochrome c oxidase (complex IV, CIV), that cooperate to transfer electrons derived from NADH and succinate to molecular oxygen, creating an electrochemical gradient over the inner membrane that drives transmembrane transport and the ATP synthase. The cytochrome b-c1 complex catalyzes electron transfer from ubiquinol to cytochrome c, linking this redox reaction to translocation of protons across the mitochondrial inner membrane, with protons being carried across the membrane as hydrogens on the quinol. In the process called Q cycle, 2 protons are consumed from the matrix, 4 protons are released into the intermembrane space and 2 electrons are passed to cytochrome c. Cytochrome c1 is a catalytic core subunit containing a c-type heme. It transfers electrons from the [2Fe-2S] iron-sulfur cluster of the Rieske protein to cytochrome c. This chain is Cytochrome c1 1, heme protein, mitochondrial (CYC1-1), found in Arabidopsis thaliana (Mouse-ear cress).